A 529-amino-acid polypeptide reads, in one-letter code: Peptide chain release factor 3 (529 aa).

Positions 11-280 constitute a tr-type G domain; that stretch reads AKRRTFAIIS…GLVAWAPAPM (270 aa). Residues 20 to 27, 88 to 92, and 142 to 145 each bind GTP; these read SHPDAGKT, DTPGH, and NKLD.

This sequence belongs to the TRAFAC class translation factor GTPase superfamily. Classic translation factor GTPase family. PrfC subfamily.

The protein resides in the cytoplasm. Functionally, increases the formation of ribosomal termination complexes and stimulates activities of RF-1 and RF-2. It binds guanine nucleotides and has strong preference for UGA stop codons. It may interact directly with the ribosome. The stimulation of RF-1 and RF-2 is significantly reduced by GTP and GDP, but not by GMP. The polypeptide is Peptide chain release factor 3 (prfC) (Salmonella typhi).